The following is a 300-amino-acid chain: MRCLALDIGGTKIAAAIVKNGEIEQRQQIHTPRENVVEGMHQALGKLLADYEGQFDYVAVASTGIINNGILSALNPKNLGGLAEFPLKASIAKHTDKPIGLLNDAQAATYAEYQLQNSEQVSNFVFITVSTGVGGGIVLNQILQTGSRGIAGHIGHTLADPNGAICGCGRRGCVEAIASGRAIEAVSSQWEEPCDPKEVFERFRKNDEKATALVERSAKAIANLIADLVISLDIQKIAIGGSVGLAEGYLSLVEKYLQDFPSIYCCEIETAKFGQDAGLIGAAYWVKDVLLDKPEGTIYG.

ATP contacts are provided by residues 5–12 and 132–139; these read ALDIGGTK and GVGGGIVL. Zn(2+) contacts are provided by His-156, Cys-166, Cys-168, and Cys-173.

The protein belongs to the ROK (NagC/XylR) family. NanK subfamily. Homodimer.

It catalyses the reaction an N-acyl-D-mannosamine + ATP = an N-acyl-D-mannosamine 6-phosphate + ADP + H(+). It functions in the pathway amino-sugar metabolism; N-acetylneuraminate degradation; D-fructose 6-phosphate from N-acetylneuraminate: step 2/5. Catalyzes the phosphorylation of N-acetylmannosamine (ManNAc) to ManNAc-6-P. The chain is N-acetylmannosamine kinase (nanK) from Haemophilus influenzae (strain ATCC 51907 / DSM 11121 / KW20 / Rd).